The following is a 958-amino-acid chain: Glycine dehydrogenase (decarboxylating) 2 (958 aa).

Lys707 is modified (N6-(pyridoxal phosphate)lysine).

Belongs to the GcvP family. As to quaternary structure, the glycine cleavage system is composed of four proteins: P, T, L and H. Pyridoxal 5'-phosphate serves as cofactor.

It catalyses the reaction N(6)-[(R)-lipoyl]-L-lysyl-[glycine-cleavage complex H protein] + glycine + H(+) = N(6)-[(R)-S(8)-aminomethyldihydrolipoyl]-L-lysyl-[glycine-cleavage complex H protein] + CO2. Functionally, the glycine cleavage system catalyzes the degradation of glycine. The P protein binds the alpha-amino group of glycine through its pyridoxal phosphate cofactor; CO(2) is released and the remaining methylamine moiety is then transferred to the lipoamide cofactor of the H protein. The chain is Glycine dehydrogenase (decarboxylating) 2 (gcvP2) from Pseudomonas aeruginosa (strain ATCC 15692 / DSM 22644 / CIP 104116 / JCM 14847 / LMG 12228 / 1C / PRS 101 / PAO1).